The chain runs to 185 residues: Large ribosomal subunit protein bL25 (185 aa).

The protein belongs to the bacterial ribosomal protein bL25 family. CTC subfamily. Part of the 50S ribosomal subunit; part of the 5S rRNA/L5/L18/L25 subcomplex. Contacts the 5S rRNA. Binds to the 5S rRNA independently of L5 and L18.

This is one of the proteins that binds to the 5S RNA in the ribosome where it forms part of the central protuberance. This Chlamydia trachomatis serovar D (strain ATCC VR-885 / DSM 19411 / UW-3/Cx) protein is Large ribosomal subunit protein bL25.